A 334-amino-acid polypeptide reads, in one-letter code: MSADKQKLTIRLCGPRGFCAGVDRAIQIVVLALKKYGPPVYVRHEIVHNRYVVEGLQQRGAIFIEDLDEIPEEHRERPVVFSAHGVPKSVPADAQARNLFYLDATCPLVSKVHKQAMRHQRLGRHVLLIGHAGHPEVIGTMGQLPHGAVTLIETVEDALHFPPPAGVELGYVSQTTLSLEDTAEIISALERRFDNIHAPAAESICYATTNRQNAVKAAAPGSDLFLVVGAPNSSNSRRLVEVAERAGARRALLVQRASEIPWEEIADLSVLGLSAGASAPEIIVDEIIAAFADSYDVSVELAITAEEPENFPVMRALRDVELTKADMAFVNGVG.

C19 contacts [4Fe-4S] cluster. (2E)-4-hydroxy-3-methylbut-2-enyl diphosphate contacts are provided by H48 and H84. Dimethylallyl diphosphate is bound by residues H48 and H84. The isopentenyl diphosphate site is built by H48 and H84. Position 106 (C106) interacts with [4Fe-4S] cluster. (2E)-4-hydroxy-3-methylbut-2-enyl diphosphate is bound at residue H134. H134 contacts dimethylallyl diphosphate. H134 contributes to the isopentenyl diphosphate binding site. The active-site Proton donor is E136. T175 serves as a coordination point for (2E)-4-hydroxy-3-methylbut-2-enyl diphosphate. C205 provides a ligand contact to [4Fe-4S] cluster. Residues S233, S234, N235, and S278 each contribute to the (2E)-4-hydroxy-3-methylbut-2-enyl diphosphate site. Residues S233, S234, N235, and S278 each contribute to the dimethylallyl diphosphate site. The isopentenyl diphosphate site is built by S233, S234, N235, and S278.

Belongs to the IspH family. [4Fe-4S] cluster serves as cofactor.

It catalyses the reaction isopentenyl diphosphate + 2 oxidized [2Fe-2S]-[ferredoxin] + H2O = (2E)-4-hydroxy-3-methylbut-2-enyl diphosphate + 2 reduced [2Fe-2S]-[ferredoxin] + 2 H(+). The enzyme catalyses dimethylallyl diphosphate + 2 oxidized [2Fe-2S]-[ferredoxin] + H2O = (2E)-4-hydroxy-3-methylbut-2-enyl diphosphate + 2 reduced [2Fe-2S]-[ferredoxin] + 2 H(+). Its pathway is isoprenoid biosynthesis; dimethylallyl diphosphate biosynthesis; dimethylallyl diphosphate from (2E)-4-hydroxy-3-methylbutenyl diphosphate: step 1/1. The protein operates within isoprenoid biosynthesis; isopentenyl diphosphate biosynthesis via DXP pathway; isopentenyl diphosphate from 1-deoxy-D-xylulose 5-phosphate: step 6/6. Catalyzes the conversion of 1-hydroxy-2-methyl-2-(E)-butenyl 4-diphosphate (HMBPP) into a mixture of isopentenyl diphosphate (IPP) and dimethylallyl diphosphate (DMAPP). Acts in the terminal step of the DOXP/MEP pathway for isoprenoid precursor biosynthesis. This Chelativorans sp. (strain BNC1) protein is 4-hydroxy-3-methylbut-2-enyl diphosphate reductase.